We begin with the raw amino-acid sequence, 220 residues long: tRNA (guanine-N(7)-)-methyltransferase (220 aa).

S-adenosyl-L-methionine contacts are provided by Glu44, Glu69, Asp96, and Asp118. Asp118 is an active-site residue. Lys122 is a substrate binding site. An interaction with RNA region spans residues 124 to 129 (RHEKRR). Substrate is bound by residues Asp154 and 191 to 194 (TEYE).

This sequence belongs to the class I-like SAM-binding methyltransferase superfamily. TrmB family.

The enzyme catalyses guanosine(46) in tRNA + S-adenosyl-L-methionine = N(7)-methylguanosine(46) in tRNA + S-adenosyl-L-homocysteine. It functions in the pathway tRNA modification; N(7)-methylguanine-tRNA biosynthesis. In terms of biological role, catalyzes the formation of N(7)-methylguanine at position 46 (m7G46) in tRNA. The protein is tRNA (guanine-N(7)-)-methyltransferase of Halalkalibacterium halodurans (strain ATCC BAA-125 / DSM 18197 / FERM 7344 / JCM 9153 / C-125) (Bacillus halodurans).